The following is a 430-amino-acid chain: tRNA(Ile)-lysidine synthase (430 aa).

21–26 provides a ligand contact to ATP; sequence SGGLDS.

Belongs to the tRNA(Ile)-lysidine synthase family.

The protein localises to the cytoplasm. The catalysed reaction is cytidine(34) in tRNA(Ile2) + L-lysine + ATP = lysidine(34) in tRNA(Ile2) + AMP + diphosphate + H(+). Ligates lysine onto the cytidine present at position 34 of the AUA codon-specific tRNA(Ile) that contains the anticodon CAU, in an ATP-dependent manner. Cytidine is converted to lysidine, thus changing the amino acid specificity of the tRNA from methionine to isoleucine. The protein is tRNA(Ile)-lysidine synthase of Salmonella agona (strain SL483).